We begin with the raw amino-acid sequence, 310 residues long: Low-salt glycan biosynthesis protein Agl12 (310 aa).

Residues 7–13 (GGAGFIG), 32–35 (DALT), and 58–59 (DI) contribute to the NAD(+) site. S82 contributes to the substrate binding site. Residue T97 participates in NAD(+) binding. Residues T122 and 122–124 (TDE) contribute to the substrate site. The active-site Proton donor is the D123. Catalysis depends on proton acceptor residues E124 and Y146. 146–150 (YSATK) is a binding site for NAD(+). N175 is a substrate binding site. N176 lines the NAD(+) pocket. Substrate is bound by residues 185 to 186 (KL), 201 to 203 (PVY), R210, N245, and 269 to 272 (RAGH).

This sequence belongs to the NAD(P)-dependent epimerase/dehydratase family. dTDP-glucose dehydratase subfamily. NAD(+) is required as a cofactor.

The protein operates within protein modification; protein glycosylation. It participates in cell surface structure biogenesis; S-layer biogenesis. Its function is as follows. Lyase involved in N-glycan biosynthetic pathway that takes place under low-salt conditions (1.75 M instead of 3.4 M). Participates in the formation of the tetrasaccharide present at 'Asn-532' of S-layer glycoprotein Csg, consisting of a sulfated hexose, 2 hexoses and rhamnose. Involved in the addition of final rhamnose (sugar 4) of the tetrasaccharide on the dolichol phosphate carrier. This is Low-salt glycan biosynthesis protein Agl12 (agl12) from Haloferax volcanii (strain ATCC 29605 / DSM 3757 / JCM 8879 / NBRC 14742 / NCIMB 2012 / VKM B-1768 / DS2) (Halobacterium volcanii).